The chain runs to 247 residues: 6-carboxyhexanoate--CoA ligase (247 aa).

It belongs to the BioW family. In terms of assembly, homodimer. The cofactor is Mg(2+).

It catalyses the reaction heptanedioate + ATP + CoA = 6-carboxyhexanoyl-CoA + AMP + diphosphate. It participates in metabolic intermediate metabolism; pimeloyl-CoA biosynthesis; pimeloyl-CoA from pimelate: step 1/1. Its function is as follows. Catalyzes the transformation of pimelate into pimeloyl-CoA with concomitant hydrolysis of ATP to AMP. The sequence is that of 6-carboxyhexanoate--CoA ligase from Persephonella marina (strain DSM 14350 / EX-H1).